Here is a 117-residue protein sequence, read N- to C-terminus: Large ribosomal subunit protein bL19 (117 aa).

The protein belongs to the bacterial ribosomal protein bL19 family.

Its function is as follows. This protein is located at the 30S-50S ribosomal subunit interface and may play a role in the structure and function of the aminoacyl-tRNA binding site. This Proteus mirabilis (strain HI4320) protein is Large ribosomal subunit protein bL19.